The chain runs to 387 residues: 3-ketoacyl-CoA thiolase (387 aa).

Residue Cys-91 is the Acyl-thioester intermediate of the active site. Active-site proton acceptor residues include His-343 and Cys-373.

This sequence belongs to the thiolase-like superfamily. Thiolase family. As to quaternary structure, heterotetramer of two alpha chains (FadB) and two beta chains (FadA).

Its subcellular location is the cytoplasm. The enzyme catalyses an acyl-CoA + acetyl-CoA = a 3-oxoacyl-CoA + CoA. The protein operates within lipid metabolism; fatty acid beta-oxidation. Its function is as follows. Catalyzes the final step of fatty acid oxidation in which acetyl-CoA is released and the CoA ester of a fatty acid two carbons shorter is formed. This chain is 3-ketoacyl-CoA thiolase, found in Erwinia tasmaniensis (strain DSM 17950 / CFBP 7177 / CIP 109463 / NCPPB 4357 / Et1/99).